A 515-amino-acid polypeptide reads, in one-letter code: Putative pumilio homolog 8, chloroplastic (515 aa).

A disordered region spans residues 1-33; sequence MMRGEFGEASSLSRSPSSPLQTEPHPQSPKFYR. The transit peptide at 1 to 70 directs the protein to the chloroplast; the sequence is MMRGEFGEAS…LSSYFSNGLC (70 aa). Residues 10-20 show a composition bias toward low complexity; it reads SSLSRSPSSPL. Residues 174–515 form the PUM-HD domain; that stretch reads SGVGALFDHQ…RIFSRNLLKN (342 aa). Pumilio repeat units follow at residues 198–233, 234–269, 270–308, 310–345, 346–381, 382–417, 418–456, and 457–490; these read EFQG…VIFS, EVIP…QIIL, MVTS…SLVK, ALRP…FIFE, DATK…KLVT, EISR…AMLA, QLKG…ELIS, and VPHF…TLVE.

It is found in the plastid. Its subcellular location is the chloroplast. The protein resides in the cytoplasm. Sequence-specific RNA-binding protein that regulates translation and mRNA stability by binding the 3'-UTR of target mRNAs. The chain is Putative pumilio homolog 8, chloroplastic (APUM8) from Arabidopsis thaliana (Mouse-ear cress).